A 530-amino-acid chain; its full sequence is Ubiquitin carboxyl-terminal hydrolase 17-like protein 17 (530 aa).

The USP domain maps to 80–375 (AGLQNMGNTC…QAYVLFYIQK (296 aa)). The active-site Nucleophile is the Cys89. His334 (proton acceptor) is an active-site residue. Composition is skewed to basic and acidic residues over residues 382–392 (SESVSRGREPR) and 398–411 (DTDR…LKRD). Disordered regions lie at residues 382–411 (SESV…LKRD) and 477–530 (NHHP…LVCQ). Over residues 493–505 (TPTHQESMNTGTL) the composition is skewed to polar residues. Basic residues predominate over residues 510 to 524 (GRARRSKGKNKHSKR).

Belongs to the peptidase C19 family. USP17 subfamily.

Its subcellular location is the nucleus. The protein localises to the endoplasmic reticulum. It carries out the reaction Thiol-dependent hydrolysis of ester, thioester, amide, peptide and isopeptide bonds formed by the C-terminal Gly of ubiquitin (a 76-residue protein attached to proteins as an intracellular targeting signal).. Functionally, deubiquitinating enzyme that removes conjugated ubiquitin from specific proteins to regulate different cellular processes that may include cell proliferation, progression through the cell cycle, apoptosis, cell migration, and the cellular response to viral infection. This Homo sapiens (Human) protein is Ubiquitin carboxyl-terminal hydrolase 17-like protein 17 (USP17L17).